The primary structure comprises 281 residues: 4-diphosphocytidyl-2-C-methyl-D-erythritol kinase (281 aa).

Catalysis depends on residues Lys-11 and Asp-138.

This sequence belongs to the GHMP kinase family. IspE subfamily.

It catalyses the reaction 4-CDP-2-C-methyl-D-erythritol + ATP = 4-CDP-2-C-methyl-D-erythritol 2-phosphate + ADP + H(+). It functions in the pathway isoprenoid biosynthesis; isopentenyl diphosphate biosynthesis via DXP pathway; isopentenyl diphosphate from 1-deoxy-D-xylulose 5-phosphate: step 3/6. Catalyzes the phosphorylation of the position 2 hydroxy group of 4-diphosphocytidyl-2C-methyl-D-erythritol. This is 4-diphosphocytidyl-2-C-methyl-D-erythritol kinase from Pelagibacter ubique (strain HTCC1062).